The chain runs to 105 residues: Large ribosomal subunit protein uL18c (105 aa).

The protein belongs to the universal ribosomal protein uL18 family. In terms of assembly, part of the 50S ribosomal subunit; contacts the 5S rRNA.

It is found in the plastid. The protein localises to the chloroplast. Binds 5S rRNA, forms part of the central protuberance of the 50S subunit. This chain is Large ribosomal subunit protein uL18c (rpl18), found in Cyanidium caldarium (Red alga).